Here is a 263-residue protein sequence, read N- to C-terminus: 5'-nucleotidase SurE (263 aa).

Positions 10, 11, 41, and 95 each coordinate a divalent metal cation.

It belongs to the SurE nucleotidase family. A divalent metal cation is required as a cofactor.

Its subcellular location is the cytoplasm. It catalyses the reaction a ribonucleoside 5'-phosphate + H2O = a ribonucleoside + phosphate. Functionally, nucleotidase that shows phosphatase activity on nucleoside 5'-monophosphates. The protein is 5'-nucleotidase SurE of Methanoculleus marisnigri (strain ATCC 35101 / DSM 1498 / JR1).